The chain runs to 119 residues: U9-hexatoxin-Hi1 (119 aa).

The first 17 residues, 1–17, serve as a signal peptide directing secretion; sequence MKLYLVILVTSVALAAA. Positions 18–53 are excised as a propeptide; sequence SPTRTKEEPIEDELLEALLSVEKSLFNEETTVMEKR. Intrachain disulfides connect Cys-55–Cys-73, Cys-66–Cys-79, Cys-70–Cys-117, and Cys-72–Cys-88.

The protein belongs to the neurotoxin 03 (Tx2) family. 03 subfamily. Expressed by the venom gland.

Its subcellular location is the secreted. Probable ion channel inhibitor. In Hadronyche infensa (Fraser island funnel-web spider), this protein is U9-hexatoxin-Hi1.